The chain runs to 420 residues: Tyrosine--tRNA ligase (420 aa).

Residue Tyr-33 participates in L-tyrosine binding. Residues 38 to 47 carry the 'HIGH' region motif; sequence PTADSLHIGH. L-tyrosine-binding residues include Tyr-168 and Gln-172. Positions 231-235 match the 'KMSKS' region motif; it reads KFGKT. Residue Lys-234 participates in ATP binding. One can recognise an S4 RNA-binding domain in the interval 353 to 419; it reads MLLVDALIKV…GKKNYYLVKL (67 aa).

It belongs to the class-I aminoacyl-tRNA synthetase family. TyrS type 1 subfamily. Homodimer.

It is found in the cytoplasm. The catalysed reaction is tRNA(Tyr) + L-tyrosine + ATP = L-tyrosyl-tRNA(Tyr) + AMP + diphosphate + H(+). Functionally, catalyzes the attachment of tyrosine to tRNA(Tyr) in a two-step reaction: tyrosine is first activated by ATP to form Tyr-AMP and then transferred to the acceptor end of tRNA(Tyr). The chain is Tyrosine--tRNA ligase from Desulfitobacterium hafniense (strain Y51).